The following is a 499-amino-acid chain: MSQLAHNLTLSIFDPVANYRAARIICTIGPSTQSVEALKGLIQSGMSVARMNFSHGSHEYHQTTINNVRQAAAELGVNIAIALDTKGPEIRTGQFVGGDAVMERGATCYVTTDPAFADKGTKDKFYIDYQNLSKVVRPGNYIYIDDGILILQVQSHEDEQTLECTVTNSHTISDRRGVNLPGCDVDLPAVSAKDRVDLQFGVEQGVDMIFASFIRSAEQVGDVRKALGPKGRDIMIICKIENHQGVQNIDSIIEESDGIMVARGDLGVEIPAEKVVVAQKILISKCNVAGKPVICATQMLESMTYNPRPTRAEVSDVANAVFNGADCVMLSGETAKGKYPNEVVQYMARICLEAQSALNEYVFFNSIKKLQHIPMSADEAVCSSAVNSVYETKAKAMVVLSNTGRSARLVAKYRPNCPIVCVTTRLQTCRQLNITQGVESVFFDADKLGHDEGKEHRVAAGVEFAKSKGYVQTGDYCVVIHADHKVKGYANQTRILLVE.

Residue arginine 50 participates in substrate binding. 4 residues coordinate K(+): asparagine 52, serine 54, aspartate 84, and threonine 85. ATP is bound at residue 52–55 (NFSH). Arginine 91 is a binding site for ATP. Glutamate 241 is a binding site for Mg(2+). The substrate site is built by glycine 264, aspartate 265, and threonine 297. Aspartate 265 contacts Mg(2+).

It belongs to the pyruvate kinase family. As to quaternary structure, homotetramer. The cofactor is Mg(2+). Requires K(+) as cofactor.

It catalyses the reaction pyruvate + ATP = phosphoenolpyruvate + ADP + H(+). It functions in the pathway carbohydrate degradation; glycolysis; pyruvate from D-glyceraldehyde 3-phosphate: step 5/5. With respect to regulation, activated by fructose 2,6-bisphosphate, activated by the effector in a non cooperative manner. The chain is Pyruvate kinase (PYK) from Leishmania mexicana.